We begin with the raw amino-acid sequence, 812 residues long: Axin-2 (812 aa).

The tract at residues 1–43 (MNRTLTDPMVSSFREDDPRPPVPGEEGETTCHHPSKLAMMRPK) is disordered. The 120-residue stretch at 84-203 (SLHFLLGDQD…LTSDIYLEYV (120 aa)) folds into the RGS domain. Disordered stretches follow at residues 275–326 (SYRR…AIPP), 388–430 (ETMS…TCEE), 446–484 (TPGC…SSMN), and 609–726 (RQTK…SGCH). Positions 285–303 (NRFTSGYSFAPATSANDSE) are enriched in polar residues. Residues 305-323 (SSDALTDDSMSMTDSSVDA) show a composition bias toward low complexity. An interaction with GSK3B region spans residues 329-415 (LGSKKQLQRE…RDESEMSSSS (87 aa)). A compositionally biased stretch (basic and acidic residues) spans 388 to 397 (ETMSSLEERL). Residues 401–410 (QEEEERDESE) show a composition bias toward acidic residues. A compositionally biased stretch (low complexity) spans 411-421 (MSSSSASHSLP). The interaction with beta-catenin stretch occupies residues 415 to 467 (SASHSLPLLPPGTCEEDPQAILDEHLSRVLKTPGCQSPGLLRHSPRSRSPEQR). A compositionally biased stretch (polar residues) spans 475–484 (STRSQSSSMN). Basic and acidic residues predominate over residues 672 to 683 (EEARRRLEEVSK). The DIX domain occupies 730-812 (GSETVVTYFF…KILGKVDRMD (83 aa)).

In terms of assembly, interacts with hwa; leading to promote the tankyrase-mediated degradation of axin1. Post-translationally, ADP-ribosylated by tankyrase tnks and tnks2. Poly-ADP-ribosylated protein is recognized by rnf146, followed by ubiquitination and subsequent activation of the Wnt signaling pathway. In terms of processing, ubiquitinated by rnf146 when poly-ADP-ribosylated, leading to its degradation and subsequent activation of the Wnt signaling pathway.

It localises to the cytoplasm. In terms of biological role, component of the beta-catenin destruction complex required for regulating ctnnb1 levels through phosphorylation and ubiquitination, and modulating Wnt-signaling. Controls dorsoventral patterning by down-regulating ctnnb1 to inhibit the Wnt signaling pathway and ventralize embryos. The polypeptide is Axin-2 (axin2) (Danio rerio (Zebrafish)).